Here is a 268-residue protein sequence, read N- to C-terminus: Tryptophan synthase alpha chain (268 aa).

Active-site proton acceptor residues include Glu49 and Asp60.

This sequence belongs to the TrpA family. As to quaternary structure, tetramer of two alpha and two beta chains.

It carries out the reaction (1S,2R)-1-C-(indol-3-yl)glycerol 3-phosphate + L-serine = D-glyceraldehyde 3-phosphate + L-tryptophan + H2O. It participates in amino-acid biosynthesis; L-tryptophan biosynthesis; L-tryptophan from chorismate: step 5/5. In terms of biological role, the alpha subunit is responsible for the aldol cleavage of indoleglycerol phosphate to indole and glyceraldehyde 3-phosphate. The sequence is that of Tryptophan synthase alpha chain from Vibrio vulnificus (strain YJ016).